The primary structure comprises 130 residues: Small ribosomal subunit protein uS11 (130 aa).

This sequence belongs to the universal ribosomal protein uS11 family. In terms of assembly, part of the 30S ribosomal subunit. Interacts with proteins S7 and S18. Binds to IF-3.

Its function is as follows. Located on the platform of the 30S subunit, it bridges several disparate RNA helices of the 16S rRNA. Forms part of the Shine-Dalgarno cleft in the 70S ribosome. The polypeptide is Small ribosomal subunit protein uS11 (Prochlorococcus marinus (strain MIT 9301)).